The following is a 91-amino-acid chain: Cell division topological specificity factor (91 aa).

It belongs to the MinE family.

Its function is as follows. Prevents the cell division inhibition by proteins MinC and MinD at internal division sites while permitting inhibition at polar sites. This ensures cell division at the proper site by restricting the formation of a division septum at the midpoint of the long axis of the cell. The chain is Cell division topological specificity factor from Lachnospira eligens (strain ATCC 27750 / DSM 3376 / VPI C15-48 / C15-B4) (Eubacterium eligens).